Here is a 225-residue protein sequence, read N- to C-terminus: MIEFLSDIDTQLLLFFNGIHSPFWDYFMSAFTGKVIWVPMYASILYILLKNFHWKVALCYVVAIALTITFADQMCNSFLRPLVGRLRPSNPENPIADLVYIVNGRRGGGFGFPSCHAANSFGLAIFLICLFRKRWLSIFIVLWAFTNSYTRLYLGLHYPGDLVAGAIIGGFGGWLFYFIAHKLTARLQSDTPVPGKGAGMKQTEVMIYTGLLTLAGIIIYSIVQS.

6 helical membrane-spanning segments follow: residues Ser-29–Leu-49, Asn-51–Ala-71, Phe-110–Leu-130, Leu-136–Leu-156, Gly-160–Ala-180, and Thr-203–Val-223.

It belongs to the lipid A LpxF 4'-phosphatase family.

The protein resides in the cell inner membrane. It functions in the pathway bacterial outer membrane biogenesis; LPS lipid A biosynthesis. In terms of biological role, probably removes the 4'-phosphate group from lipid A. Removal of this phosphate group confers resistance to cationic antimicrobial peptides (CAMPs), inflammation-associated peptides produced by the human host. This LPS modification helps maintain the stability of this commensal bacterium in gut microbiota. This Bacteroides thetaiotaomicron (strain ATCC 29148 / DSM 2079 / JCM 5827 / CCUG 10774 / NCTC 10582 / VPI-5482 / E50) protein is Lipid A 4'-phosphatase.